The primary structure comprises 338 residues: MSTLRLLISDSYDPWFNLAVEECIFRQMPATQRVLFLWRNADTVVIGRAQNPWKECNTRRMEEDNVRLARRSSGGGAVFHDLGNTCFTFMAGKPEYDKTISTSIVLNALNALGVSAEASGRNDLVVKTVEGDRKVSGSAYRETKDRGFHHGTLLLNADLSRLANYLNPDKKKLAAKGITSVRSRVTNLTELLPGITHEQVCEAITKAFFAHYGERVEAEIISPDKTPDLPNFAETFARQSSWEWNFGQAPAFSHLLDERFSWGGVELHFDVEKGHITRAQVFTDSLNPAPLEALAGRLQGCLYRADMLQQECEALLVDFPDQEKELRELSTWIAGAVR.

The BPL/LPL catalytic domain occupies 29-216 (PATQRVLFLW…AFFAHYGERV (188 aa)). ATP contacts are provided by residues Arg71, 76-79 (GAVF), and Lys134. A (R)-lipoate-binding site is contributed by Lys134.

Belongs to the LplA family. Monomer.

It localises to the cytoplasm. The catalysed reaction is L-lysyl-[lipoyl-carrier protein] + (R)-lipoate + ATP = N(6)-[(R)-lipoyl]-L-lysyl-[lipoyl-carrier protein] + AMP + diphosphate + H(+). It functions in the pathway protein modification; protein lipoylation via exogenous pathway; protein N(6)-(lipoyl)lysine from lipoate: step 1/2. Its pathway is protein modification; protein lipoylation via exogenous pathway; protein N(6)-(lipoyl)lysine from lipoate: step 2/2. Catalyzes both the ATP-dependent activation of exogenously supplied lipoate to lipoyl-AMP and the transfer of the activated lipoyl onto the lipoyl domains of lipoate-dependent enzymes. The protein is Lipoate-protein ligase A of Shigella sonnei (strain Ss046).